Consider the following 298-residue polypeptide: MARRSRHRLLLLLLRYLVVALGYHKAYGFSAPKDQQVVTAVEYQEAILACKTPKKTVSSRLEWKKLGRSVSFVYYQQTLQGDFKNRAEMIDFNIRIKNVTRSDAGKYRCEVSAPSEQGQNLEEDTVTLEVLVAPAVPSCEVPSSALSGTVVELRCQDKEGNPAPEYTWFKDGIRLLENPRLGSQSTNSSYTMNTKTGTLQFNTVSKLDTGEYSCEARNSVGYRRCPGKRMQVDDLNISGIIAAVVVVALVISVCGLGVCYAQRKGYFSKETSFQKSNSSSKATTMSENDFKHTKSFII.

Positions 1 to 28 (MARRSRHRLLLLLLRYLVVALGYHKAYG) are cleaved as a signal peptide. At 29-238 (FSAPKDQQVV…RMQVDDLNIS (210 aa)) the chain is on the extracellular side. The 96-residue stretch at 32-127 (PKDQQVVTAV…GQNLEEDTVT (96 aa)) folds into the Ig-like V-type domain. 2 disulfides stabilise this stretch: cysteine 50–cysteine 109 and cysteine 155–cysteine 214. 3 N-linked (GlcNAc...) asparagine glycosylation sites follow: asparagine 98, asparagine 187, and asparagine 236. Residues 134–238 (PAVPSCEVPS…RMQVDDLNIS (105 aa)) enclose the Ig-like C2-type domain. Residues 239-259 (GIIAAVVVVALVISVCGLGVC) traverse the membrane as a helical segment. Topologically, residues 260–298 (YAQRKGYFSKETSFQKSNSSSKATTMSENDFKHTKSFII) are cytoplasmic.

Belongs to the immunoglobulin superfamily. In terms of tissue distribution, highly expressed in heart, placenta, lung, foreskin and lymph node. Prominently expressed on high endothelial venules and also present on the endothelia of other vessels (at protein level). Also expressed in the brain in the caudate nuclei.

The protein resides in the cell membrane. The protein localises to the cell junction. It is found in the tight junction. In terms of biological role, junctional adhesion protein that mediates heterotypic cell-cell interactions with its cognate receptor JAM3 to regulate different cellular processes. Plays a role in homing and mobilization of hematopoietic stem and progenitor cells within the bone marrow. At the surface of bone marrow stromal cells, it contributes to the retention of the hematopoietic stem and progenitor cells expressing JAM3. Plays a central role in leukocytes extravasation by facilitating not only transmigration but also tethering and rolling of leukocytes along the endothelium. Tethering and rolling of leukocytes are dependent on the binding by JAM2 of the integrin alpha-4/beta-1. Plays a role in spermatogenesis where JAM2 and JAM3, which are respectively expressed by Sertoli and germ cells, mediate an interaction between both cell types and play an essential role in the anchorage of germ cells onto Sertoli cells and the assembly of cell polarity complexes during spermatid differentiation. Also functions as an inhibitory somatodendritic cue that prevents the myelination of non-axonal parts of neurons. During myogenesis, it is involved in myocyte fusion. May also play a role in angiogenesis. This chain is Junctional adhesion molecule B, found in Homo sapiens (Human).